The sequence spans 338 residues: MVQITKGKFDGLQRLSNEKGVIAALAIDQRGSLKKMIQQAKGTENKKDVEDFKQLVSEELTPYASAILLDLEYGTPAIKARHEGSGLLTSYEKTGYDATTPGKLPDLIEDLSALRIKENGGDAVKILVYYDPDEPAEINEIKYAFLERIGAECRAVDIPFFLEPITYDAKVTDSGSLEYAKLKPAKVKASIKEFSKPRYGVDVLKLEVPVNFKYVEGFAEGEVAYTQDEAARHFEECSDLSPLPFIYLSAGVTSEMFHKTIQFANQHNVQYSGVLCGRATWADGIEVYGKQGDDALREWLRTQGKENITSLDKLLDEGAVPWWTKYGSFEDVHVVEKQ.

It belongs to the aldolase LacD family.

It carries out the reaction D-tagatofuranose 1,6-bisphosphate = D-glyceraldehyde 3-phosphate + dihydroxyacetone phosphate. It functions in the pathway carbohydrate metabolism; D-tagatose 6-phosphate degradation; D-glyceraldehyde 3-phosphate and glycerone phosphate from D-tagatose 6-phosphate: step 2/2. This Listeria monocytogenes serotype 4a (strain HCC23) protein is Tagatose 1,6-diphosphate aldolase.